Consider the following 430-residue polypeptide: Adenylosuccinate synthetase (430 aa).

Residues 13 to 19 (GDEGKGK) and 41 to 43 (GHT) each bind GTP. The active-site Proton acceptor is D14. Mg(2+) is bound by residues D14 and G41. IMP contacts are provided by residues 14-17 (DEGK), 39-42 (NAGH), T130, R144, Q225, T240, and R304. The active-site Proton donor is H42. 300-306 (STTGRAR) lines the substrate pocket. Residues R306, 332–334 (KLD), and 414–416 (STG) contribute to the GTP site.

Belongs to the adenylosuccinate synthetase family. Homodimer. Mg(2+) is required as a cofactor.

It localises to the cytoplasm. The enzyme catalyses IMP + L-aspartate + GTP = N(6)-(1,2-dicarboxyethyl)-AMP + GDP + phosphate + 2 H(+). The protein operates within purine metabolism; AMP biosynthesis via de novo pathway; AMP from IMP: step 1/2. In terms of biological role, plays an important role in the de novo pathway of purine nucleotide biosynthesis. Catalyzes the first committed step in the biosynthesis of AMP from IMP. This Thioalkalivibrio sulfidiphilus (strain HL-EbGR7) protein is Adenylosuccinate synthetase.